The sequence spans 94 residues: uncharacterized protein (94 aa).

This is an uncharacterized protein from Saccharomyces cerevisiae (strain ATCC 204508 / S288c) (Baker's yeast).